Here is a 1139-residue protein sequence, read N- to C-terminus: Ras GTPase-activating protein nGAP (1139 aa).

The segment at 1-87 (MQTPEVPAER…SRGLPKLKES (87 aa)) is disordered. Serine 16 is subject to Phosphoserine. The span at 17–36 (ISGTSTSEKPNSMDTANTSP) shows a compositional bias: polar residues. The PH domain occupies 41–158 (GFFSKRLKGS…WMENLRRTVQ (118 aa)). Residues 45–56 (KRLKGSIKRTKS) are compositionally biased toward basic residues. A compositionally biased stretch (basic and acidic residues) spans 73-87 (STDDRSRGLPKLKES). Serine 89 carries the phosphoserine modification. Residues 149–267 (WMENLRRTVQ…TGRQFVEKWY (119 aa)) form the C2 domain. The region spanning 343–551 (GRAKDFLTDL…GGMKRFLLEI (209 aa)) is the Ras-GAP domain. Threonine 620 carries the post-translational modification Phosphothreonine. Serine 663 bears the Phosphoserine mark. Disordered regions lie at residues 684-704 (ASSQ…LPNG), 751-782 (ETQS…LSFQ), 803-869 (SLEN…GQAQ), 910-953 (EPVQ…SATM), and 1116-1139 (NGIS…NSSC). 2 stretches are compositionally biased toward polar residues: residues 751-760 (ETQSTPQSAP) and 803-818 (SLEN…QSNS). Residues 833 to 855 (DFTKRSTQSEDFSRRHTVPDRHI) are compositionally biased toward basic and acidic residues. A Phosphoserine modification is found at serine 864. The span at 916-928 (SRSRQQSSSSRES) shows a compositional bias: low complexity.

Interacts with PEAK1.

In terms of biological role, inhibitory regulator of the Ras-cyclic AMP pathway. This Homo sapiens (Human) protein is Ras GTPase-activating protein nGAP (RASAL2).